The sequence spans 302 residues: Pyridoxal 5'-phosphate synthase subunit PdxS (302 aa).

D-ribose 5-phosphate is bound at residue D32. Residue K89 is the Schiff-base intermediate with D-ribose 5-phosphate of the active site. G161 provides a ligand contact to D-ribose 5-phosphate. R173 provides a ligand contact to D-glyceraldehyde 3-phosphate. Residues G222 and 243–244 contribute to the D-ribose 5-phosphate site; that span reads GS. The interval 276-302 is disordered; it reads ASNPGKGMKGEANADLSEGEKLQTRGV. The segment covering 293-302 has biased composition (basic and acidic residues); it reads EGEKLQTRGV.

Belongs to the PdxS/SNZ family. In the presence of PdxT, forms a dodecamer of heterodimers.

The catalysed reaction is aldehydo-D-ribose 5-phosphate + D-glyceraldehyde 3-phosphate + L-glutamine = pyridoxal 5'-phosphate + L-glutamate + phosphate + 3 H2O + H(+). It participates in cofactor biosynthesis; pyridoxal 5'-phosphate biosynthesis. Catalyzes the formation of pyridoxal 5'-phosphate from ribose 5-phosphate (RBP), glyceraldehyde 3-phosphate (G3P) and ammonia. The ammonia is provided by the PdxT subunit. Can also use ribulose 5-phosphate and dihydroxyacetone phosphate as substrates, resulting from enzyme-catalyzed isomerization of RBP and G3P, respectively. The polypeptide is Pyridoxal 5'-phosphate synthase subunit PdxS (Haloquadratum walsbyi (strain DSM 16790 / HBSQ001)).